Consider the following 879-residue polypeptide: Valine--tRNA ligase (879 aa).

Residues 45–55 carry the 'HIGH' region motif; the sequence is PNVTGKLHLGH. The 'KMSKS' region signature appears at 521 to 525; that stretch reads KMSKS. Residue Lys-524 participates in ATP binding. Residues 806–879 adopt a coiled-coil conformation; it reads LTELVNVDEE…ERMKELKESK (74 aa).

It belongs to the class-I aminoacyl-tRNA synthetase family. ValS type 1 subfamily. As to quaternary structure, monomer.

Its subcellular location is the cytoplasm. The catalysed reaction is tRNA(Val) + L-valine + ATP = L-valyl-tRNA(Val) + AMP + diphosphate. Its function is as follows. Catalyzes the attachment of valine to tRNA(Val). As ValRS can inadvertently accommodate and process structurally similar amino acids such as threonine, to avoid such errors, it has a 'posttransfer' editing activity that hydrolyzes mischarged Thr-tRNA(Val) in a tRNA-dependent manner. The chain is Valine--tRNA ligase from Lactobacillus johnsonii (strain CNCM I-12250 / La1 / NCC 533).